Consider the following 2312-residue polypeptide: Protein Ycf2 (2312 aa).

Disordered stretches follow at residues 170–191, 223–253, and 942–1009; these read SSQLKGSSDQSRDHFDSIGTED, TEIESDRFSKGLSGSSSKSRLFTEGEKEMNN, and KRKK…KRKE. Residues 232 to 242 show a composition bias toward low complexity; that stretch reads KGLSGSSSKSR. Composition is skewed to basic and acidic residues over residues 243 to 252 and 950 to 1007; these read LFTEGEKEMN and KRKE…PEKR. Residue 1439–1446 coordinates ATP; that stretch reads GSIGSGRS. Disordered regions lie at residues 1513–1532, 1857–1983, and 2050–2166; these read YEDRDSDDYEPGASDDYEPG, LVGS…LLRP, and PAEE…DGFS. Over residues 1863–1963 the composition is skewed to acidic residues; it reads TEEEVEGTEE…GEGTEDEEVE (101 aa). The segment covering 1964–1976 has biased composition (basic and acidic residues); sequence GTEKDSSQFDNDR. Acidic residues-rich tracts occupy residues 2050-2067 and 2074-2149; these read PAEEIPEEEDPLPEEALE and GEEE…ENDS.

The protein belongs to the Ycf2 family.

The protein resides in the plastid. It localises to the chloroplast stroma. Functionally, probable ATPase of unknown function. Its presence in a non-photosynthetic plant (Epifagus virginiana) and experiments in tobacco indicate that it has an essential function which is probably not related to photosynthesis. In Oenothera parviflora (Small-flowered evening primrose), this protein is Protein Ycf2.